An 889-amino-acid chain; its full sequence is Chitin synthase I (889 aa).

Asn-43 carries an N-linked (GlcNAc...) asparagine glycan. Residues 94 to 138 form a disordered region; sequence GEYFDGYNQGHPPQEHQAYDDDGQPLIEDQHGYSDNPQHQTQTPA. Polar residues predominate over residues 126–137; sequence YSDNPQHQTQTP. Asn-199 carries N-linked (GlcNAc...) asparagine glycosylation. A run of 9 helical transmembrane segments spans residues 431-451, 530-550, 560-580, 606-626, 641-661, 687-707, 716-736, 815-835, and 861-881; these read SAFGFISVLPGAFSAYRYVAL, RWLNGSFFAAIYAIAHFYEFF, LAFFVEFVFNTINMIFAWFAI, ILGVVFTWLYGVFLMTCFVLS, MVWFWAIIMIYLMFAAIFIAV, TLIISVMSTFGIWLIASIIMF, FIQYMLLTPTYTNVLNVYAFC, GVVLIWMITNFALAALVLSSA, and IVLWSVAVLSGFKFLGAMWFL.

Belongs to the chitin synthase family. Class I subfamily. As to expression, expressed in hyphal bodies.

It localises to the cell membrane. It catalyses the reaction [(1-&gt;4)-N-acetyl-beta-D-glucosaminyl](n) + UDP-N-acetyl-alpha-D-glucosamine = [(1-&gt;4)-N-acetyl-beta-D-glucosaminyl](n+1) + UDP + H(+). Functionally, polymerizes chitin, a structural polymer of the cell wall and septum, by transferring the sugar moiety of UDP-GlcNAc to the non-reducing end of the growing chitin polymer. Contributes to the production of conidia and the ability of fungal conidia to germinate. Not involved in fungal stress tolerances. The protein is Chitin synthase I of Metarhizium acridum (strain CQMa 102).